We begin with the raw amino-acid sequence, 146 residues long: Metallothiol transferase FosB (146 aa).

Residues 4–120 (GINHMTFSVS…DGHLLEVHTG (117 aa)) form the VOC domain. The Mg(2+) site is built by histidine 7, histidine 66, and glutamate 116. Glutamate 116 functions as the Proton donor/acceptor in the catalytic mechanism.

It belongs to the fosfomycin resistance protein family. FosB subfamily. As to quaternary structure, homodimer. Requires Mg(2+) as cofactor.

It localises to the cytoplasm. Metallothiol transferase which confers resistance to fosfomycin by catalyzing the addition of a thiol cofactor to fosfomycin. L-cysteine is probably the physiological thiol donor. This is Metallothiol transferase FosB from Shouchella clausii (strain KSM-K16) (Alkalihalobacillus clausii).